The chain runs to 114 residues: Ribonuclease P protein component (114 aa).

It belongs to the RnpA family. In terms of assembly, consists of a catalytic RNA component (M1 or rnpB) and a protein subunit.

It carries out the reaction Endonucleolytic cleavage of RNA, removing 5'-extranucleotides from tRNA precursor.. Functionally, RNaseP catalyzes the removal of the 5'-leader sequence from pre-tRNA to produce the mature 5'-terminus. It can also cleave other RNA substrates such as 4.5S RNA. The protein component plays an auxiliary but essential role in vivo by binding to the 5'-leader sequence and broadening the substrate specificity of the ribozyme. The sequence is that of Ribonuclease P protein component from Alkaliphilus oremlandii (strain OhILAs) (Clostridium oremlandii (strain OhILAs)).